A 385-amino-acid chain; its full sequence is Mannitol-1-phosphate 5-dehydrogenase (385 aa).

Position 4-15 (4-15) interacts with NAD(+); that stretch reads AVHFGAGNIGRG.

It belongs to the mannitol dehydrogenase family.

It catalyses the reaction D-mannitol 1-phosphate + NAD(+) = beta-D-fructose 6-phosphate + NADH + H(+). The protein is Mannitol-1-phosphate 5-dehydrogenase of Lactococcus lactis subsp. lactis (strain IL1403) (Streptococcus lactis).